The following is a 481-amino-acid chain: UDP-N-acetylmuramoyl-L-alanyl-D-glutamate--L-lysine ligase (481 aa).

S42 lines the UDP-N-acetyl-alpha-D-muramoyl-L-alanyl-D-glutamate pocket. 118-124 (GTKGKTT) is a binding site for ATP. Residues 160 to 161 (TT), S187, and R195 each bind UDP-N-acetyl-alpha-D-muramoyl-L-alanyl-D-glutamate. At K229 the chain carries N6-carboxylysine. The L-lysine recognition motif motif lies at 404–407 (DDPN).

This sequence belongs to the MurCDEF family. MurE subfamily. In terms of processing, carboxylation is probably crucial for Mg(2+) binding and, consequently, for the gamma-phosphate positioning of ATP.

The protein resides in the cytoplasm. The enzyme catalyses UDP-N-acetyl-alpha-D-muramoyl-L-alanyl-D-glutamate + L-lysine + ATP = UDP-N-acetyl-alpha-D-muramoyl-L-alanyl-gamma-D-glutamyl-L-lysine + ADP + phosphate + H(+). Its pathway is cell wall biogenesis; peptidoglycan biosynthesis. Functionally, catalyzes the addition of L-lysine to the nucleotide precursor UDP-N-acetylmuramoyl-L-alanyl-D-glutamate (UMAG) in the biosynthesis of bacterial cell-wall peptidoglycan. In Streptococcus suis (strain 98HAH33), this protein is UDP-N-acetylmuramoyl-L-alanyl-D-glutamate--L-lysine ligase.